The chain runs to 641 residues: MNKKTFYITTPIYYPSAKLHIGNTYTTVAADALARFKRLTGHDVLFLTGTDEHGQKIQRVAEEKGLKPKEYLDNMVDSIKELWKSMNISYDKFIRTTDDYHIESVQKIFKKLYEQGDIYKGEYEGWYCTPCESFWTESQLDDHNCPDCGRPVEKTKEEAYFFKMSKYADRLIKYIEENPHFIQPESRKNEMLNNFLKPGLQDLCISRTSFDWGIPVSFDNKHVIYVWIDALSNYITALGYNSDNQELLEKFWPANVHLVGKDILRFHTIYWPIMLMALGIELPKQVFGHGWLLVDGGKMSKSKGNVVDPVVLVDHFGEDTVRYYLLREIPFGSDGLFNNELFIKKINSDLANDLGNLLSRTVAMVQKYFNGIMPAPIAKEPIDDELINLALDTREKVENNMEKLKIPEVLDEIWTLIGRANKYIDETTPWILAKDEDKKDRLGTVLYNLSETLRIISVLISAFIPKTSERINEQLNVDLTTWDSIASFDGTKAGTKVVKGDALFPRIDVEAKIEELNSLKEKKEKKEIKPIKEEITIDDFDKIDLRVVKVISCEPVKGAKKLLKLKVDLGGEERQVISGIAQYYKPEELVGKSVVLVANLKPAKLRGELSQGMILAAATDDDSKLFTVSIPGELPTGSQVR.

The 'HIGH' region motif lies at 13-23 (YYPSAKLHIGN). Cysteine 128, cysteine 131, cysteine 145, and cysteine 148 together coordinate Zn(2+). The 'KMSKS' region signature appears at 298-302 (KMSKS). Lysine 301 is an ATP binding site. The region spanning 539 to 641 (DFDKIDLRVV…GELPTGSQVR (103 aa)) is the tRNA-binding domain.

Belongs to the class-I aminoacyl-tRNA synthetase family. MetG type 2A subfamily. In terms of assembly, homodimer. It depends on Zn(2+) as a cofactor.

It localises to the cytoplasm. The catalysed reaction is tRNA(Met) + L-methionine + ATP = L-methionyl-tRNA(Met) + AMP + diphosphate. Functionally, is required not only for elongation of protein synthesis but also for the initiation of all mRNA translation through initiator tRNA(fMet) aminoacylation. The sequence is that of Methionine--tRNA ligase from Clostridium tetani (strain Massachusetts / E88).